Reading from the N-terminus, the 129-residue chain is Small ribosomal subunit protein uS11 (129 aa).

Belongs to the universal ribosomal protein uS11 family. In terms of assembly, part of the 30S ribosomal subunit. Interacts with proteins S7 and S18. Binds to IF-3.

In terms of biological role, located on the platform of the 30S subunit, it bridges several disparate RNA helices of the 16S rRNA. Forms part of the Shine-Dalgarno cleft in the 70S ribosome. This chain is Small ribosomal subunit protein uS11, found in Maricaulis maris (strain MCS10) (Caulobacter maris).